A 144-amino-acid chain; its full sequence is Putative 2'-deoxynucleoside 5'-phosphate N-hydrolase 1 (144 aa).

Substrate contacts are provided by residues 7–13, Tyr-22, His-39, Glu-83, and 107–109; these read YFCGSIR and SGM.

Belongs to the 2'-deoxynucleoside 5'-phosphate N-hydrolase 1 family. As to quaternary structure, monomer and homodimer.

The protein localises to the cytoplasm. It is found in the nucleus. The enzyme catalyses a pyrimidine 2'-deoxyribonucleoside 5'-phosphate + H2O = a pyrimidine nucleobase + 2-deoxy-D-ribose 5-phosphate. It catalyses the reaction a purine 2'-deoxyribonucleoside 5'-phosphate + H2O = a purine nucleobase + 2-deoxy-D-ribose 5-phosphate. Catalyzes the cleavage of the N-glycosidic bond of deoxyribonucleoside 5'-monophosphates to yield deoxyribose 5-phosphate and a purine or pyrimidine base. This Trichoplax adhaerens (Trichoplax reptans) protein is Putative 2'-deoxynucleoside 5'-phosphate N-hydrolase 1.